Reading from the N-terminus, the 156-residue chain is Ribosome maturation factor RimP (156 aa).

This sequence belongs to the RimP family.

It localises to the cytoplasm. Its function is as follows. Required for maturation of 30S ribosomal subunits. In Lysinibacillus sphaericus (strain C3-41), this protein is Ribosome maturation factor RimP.